The primary structure comprises 192 residues: MGQIEWAMWANEQALASGLILMTGGIVATAGQFTQWYLGTYSIAAGVLVCLLEYPRGRRTKGSTMERCEQKYMTKVVKAFGPLSRNYYIRAFLHLGLSVPAGFLLATILGTACLAIASGIYLLAAIRGEQWTPIEPKPKERPQVGGTIKQPPSNPPPRPPPEARKKPGEEAVAGVPRGAPRKTPCPVTDEVV.

Over 2–7 (GQIEWA) the chain is Cytoplasmic. The chain crosses the membrane as a helical span at residues 8–30 (MWANEQALASGLILMTGGIVATA). Residues 31 to 35 (GQFTQ) lie on the Extracellular side of the membrane. Residues 36–53 (WYLGTYSIAAGVLVCLLE) form a helical membrane-spanning segment. Topologically, residues 54 to 69 (YPRGRRTKGSTMERCE) are cytoplasmic. Residues 70–80 (QKYMTKVVKAF) lie within the membrane without spanning it. Residues 81 to 86 (GPLSRN) are Cytoplasmic-facing. The chain crosses the membrane as a helical span at residues 87–104 (YYIRAFLHLGLSVPAGFL). A topological domain (extracellular) is located at residue Leu105. A helical transmembrane segment spans residues 106–126 (ATILGTACLAIASGIYLLAAI). At 127 to 192 (RGEQWTPIEP…TPCPVTDEVV (66 aa)) the chain is on the cytoplasmic side. The interval 134 to 192 (IEPKPKERPQVGGTIKQPPSNPPPRPPPEARKKPGEEAVAGVPRGAPRKTPCPVTDEVV) is disordered. Thr147 bears the Phosphothreonine mark. A Glycyl lysine isopeptide (Lys-Gly) (interchain with G-Cter in ubiquitin) cross-link involves residue Lys149.

It belongs to the p22phox family. As to quaternary structure, component of the phagocyte NADPH oxidase core complex/cytochrome b558 complex, composed of CYBB (heavy chain (beta)) and CYBA (light chain (alpha)). Component of the phagocyte NADPH oxidase complex composed of an obligatory core heterodimer formed by the membrane proteins CYBA and CYBB and the cytosolic regulatory subunits NCF1/p47-phox, NCF2/p67-phox, NCF4/p40-phox and the small GTPase RAC1 or RAC2. Interacts with NCF1 (via SH3 domain). Interacts with SH3PXD2A. Interacts with DUOX1, DUOX2 and TPO. Interacts with NOX4; this interaction mediates superoxide generation. Interacts with calprotectin (S100A8/9). Interacts with GBP7. Interacts with NOXO1. Forms a heterodimer with NOX3 and is essential for activity and cell membrane localization of NOX3. Interacts with NOX1. Post-translationally, phosphorylation at Thr-147 enhances NADPH oxidase activity by promoting NCF1/p47-phox binding. In terms of processing, ubiquitinated at Lys-149 likely by RNF145.

The protein resides in the cell membrane. Subunit of NADPH oxidase complexes that is required for the NADPH oxidase activity that generates, in various cell types, superoxide from molecular oxygen utilizing NADPH as an electron donor. Subunit of the phagocyte NADPH oxidase complex that mediates the transfer of electrons from cytosolic NADPH to O2 to produce the superoxide anion (O2(-)). In the activated complex, electrons are first transferred from NADPH to flavin adenine dinucleotide (FAD) and subsequently transferred via two heme molecules to molecular oxygen, producing superoxide through an outer-sphere reaction. Activation of the NADPH oxidase complex is initiated by the assembly of cytosolic subunits of the NADPH oxidase complex with the core NADPH oxidase complex to form a complex at the plasma membrane or phagosomal membrane. This activation process is initiated by phosphorylation dependent binding of the cytosolic NCF1/p47-phox subunit to the C-terminus of CYBA/p22-phox. Aassociates with NOX3 to form a functional NADPH oxidase constitutively generating superoxide. This Sus scrofa (Pig) protein is Cytochrome b-245 light chain.